Consider the following 125-residue polypeptide: Protein MGF 110-4L (125 aa).

The N-terminal stretch at 1–29 (MLVVFFLGILGLLANQILGLPTQAGGHLR) is a signal peptide. N-linked (GlcNAc...) asparagine; by host glycosylation occurs at Asn-65. The Prevents secretion from ER signature appears at 122-125 (KEDL).

The protein belongs to the asfivirus MGF 110 family.

Its subcellular location is the virion. It localises to the host endoplasmic reticulum-Golgi intermediate compartment. Causes the redistribution of lumenal ER protein to an enlarged ERGIC compartment. The sequence is that of Protein MGF 110-4L from Ornithodoros (relapsing fever ticks).